Consider the following 192-residue polypeptide: MCSVARHMESIMLFTLLGLCVGLAAGTEAAVVKDFDVNKFLGFWYEIALASKMGAYGLAHKEEKMGAMVVELKENLLALTTTYYNEGHCVLEKVAATQVDGSAKYKVTRISGEKEVVVVATDYMTYTVIDITSLVAGAVHRAMKLYSRSLDNNGEALNNFQKIALKHGFSETDIHILKHDLTCVNALQSGQI.

The N-terminal stretch at 1-26 (MCSVARHMESIMLFTLLGLCVGLAAG) is a signal peptide. A disulfide bridge links Cys-89 with Cys-183.

This sequence belongs to the calycin superfamily. Lipocalin family. Post-translationally, 2 different forms with differently processed N-termini exist. As to expression, epididymal fluid of the caudal and corpus regions (at protein level).

The protein localises to the secreted. Functionally, associates with spermatozoa in the epididymal fluid but does not bind tightly to them. Binds both all-trans and 13-cis retinoic acid. May act as a retinoid carrier protein which is required for epididymal function and/or sperm maturation. In Mus musculus (Mouse), this protein is Epididymal-specific lipocalin-5.